Reading from the N-terminus, the 283-residue chain is Bifunctional protein FolD (283 aa).

NADP(+) contacts are provided by residues 166–168 (GAS) and isoleucine 232.

The protein belongs to the tetrahydrofolate dehydrogenase/cyclohydrolase family. As to quaternary structure, homodimer.

It carries out the reaction (6R)-5,10-methylene-5,6,7,8-tetrahydrofolate + NADP(+) = (6R)-5,10-methenyltetrahydrofolate + NADPH. The catalysed reaction is (6R)-5,10-methenyltetrahydrofolate + H2O = (6R)-10-formyltetrahydrofolate + H(+). It functions in the pathway one-carbon metabolism; tetrahydrofolate interconversion. Its function is as follows. Catalyzes the oxidation of 5,10-methylenetetrahydrofolate to 5,10-methenyltetrahydrofolate and then the hydrolysis of 5,10-methenyltetrahydrofolate to 10-formyltetrahydrofolate. The sequence is that of Bifunctional protein FolD from Mannheimia succiniciproducens (strain KCTC 0769BP / MBEL55E).